We begin with the raw amino-acid sequence, 191 residues long: Insulin-like peptide INSL6 (191 aa).

The signal sequence occupies residues 1–22 (MKQLCCSCLLWLGLLLTPFSRE). 3 disulfides stabilise this stretch: C33/C172, C45/C185, and C171/C176. Positions 53-161 (FEMEEQSPMT…RSLFWGNHSQ (109 aa)) are cleaved as a propeptide — connecting peptide.

The protein belongs to the insulin family.

The protein resides in the secreted. In terms of biological role, may have a role in sperm development and fertilization. This Mus musculus (Mouse) protein is Insulin-like peptide INSL6 (Insl6).